The following is a 145-amino-acid chain: Aspartate 1-decarboxylase (145 aa).

Ser26 functions as the Schiff-base intermediate with substrate; via pyruvic acid in the catalytic mechanism. Residue Ser26 is modified to Pyruvic acid (Ser). Thr58 contacts substrate. The Proton donor role is filled by Tyr59. Residue 74 to 76 coordinates substrate; that stretch reads GGA.

It belongs to the PanD family. In terms of assembly, heterooctamer of four alpha and four beta subunits. The cofactor is pyruvate. Is synthesized initially as an inactive proenzyme, which is activated by self-cleavage at a specific serine bond to produce a beta-subunit with a hydroxyl group at its C-terminus and an alpha-subunit with a pyruvoyl group at its N-terminus.

It is found in the cytoplasm. The enzyme catalyses L-aspartate + H(+) = beta-alanine + CO2. Its pathway is cofactor biosynthesis; (R)-pantothenate biosynthesis; beta-alanine from L-aspartate: step 1/1. Catalyzes the pyruvoyl-dependent decarboxylation of aspartate to produce beta-alanine. This Synechocystis sp. (strain ATCC 27184 / PCC 6803 / Kazusa) protein is Aspartate 1-decarboxylase.